Consider the following 646-residue polypeptide: Protein real-time (646 aa).

In terms of domain architecture, PRELI/MSF1 spans 2–175 (VQKYESPVRI…FINELKKEGI (174 aa)). The CRAL-TRIO domain occupies 294–471 (TPVVVEKYFP…FLGGSCITMI (178 aa)). Positions 499–646 (HHGLYKSVDL…GFSSNSLQSR (148 aa)) constitute a GOLD domain.

Its subcellular location is the mitochondrion. The polypeptide is Protein real-time (Aedes aegypti (Yellowfever mosquito)).